A 1464-amino-acid chain; its full sequence is Secretory phospholipase A2 receptor (1464 aa).

The signal sequence occupies residues 1–22; the sequence is MLLSPSLLLPLLLLLGAPRGCA. The Extracellular segment spans residues 23–1398; it reads EGVAAALTPE…ELPEKGPSHS (1376 aa). Residues 40–163 form the Ricin B-type lectin domain; the sequence is KGIFVIQSES…GSGGGDICEY (124 aa). Cystine bridges form between Cys53–Cys66, Cys91–Cys108, Cys180–Cys206, Cys194–Cys221, Cys262–Cys356, Cys332–Cys348, Cys408–Cys503, Cys480–Cys495, Cys619–Cys636, Cys701–Cys798, Cys776–Cys790, Cys842–Cys939, Cys916–Cys931, Cys1069–Cys1089, Cys1211–Cys1225, Cys1282–Cys1378, and Cys1356–Cys1370. N-linked (GlcNAc...) asparagine glycosylation is present at Asn95. The 49-residue stretch at 175 to 223 folds into the Fibronectin type-II domain; it reads AHGMPCMFPFQYNHQWHHECTREGREDDLLWCATTSRYERDEKWGFCPD. 8 consecutive C-type lectin domains span residues 240–357, 387–504, 524–645, 675–799, 821–940, 967–1098, 1123–1234, and 1259–1379; these read NSHI…YVCK, YNRN…YVCK, HGGF…MSLC, GLAS…WICK, YQDA…SICK, FNYK…GFVC, YGNR…GAIC, and FKSN…FICK. Residue Asn456 is glycosylated (N-linked (GlcNAc...) asparagine). The chain crosses the membrane as a helical span at residues 1399 to 1419; sequence IIPLAVVLTLIVIVAICTLSF. The Cytoplasmic portion of the chain corresponds to 1420 to 1464; it reads CIYKHNGGFFRRLAGFRNPYYPATNFSTVHLEENILISDLEKSDQ. Residues 1437-1443 carry the Endocytosis signal motif; it reads NPYYPAT.

Interacts with sPLA2-IB/PLA2G1B; this interaction mediates intracellular signaling as well as clearance of extracellular sPLA2-IB/PLA2G1B via endocytotic pathway. Interacts with sPLA2-X/PLA2G10; this interaction mediates sPLA2-X/PLA2G10 clearance and inactivation. Post-translationally, the secretory phospholipase A2 receptor form may be produced by the action of metalloproteinases. It contains all extracellular domains and only lacks transmembrane and cytosolic regions. It is however unclear whether this form is produced by proteolytic cleavage as suggested by some experiments, or by alternative splicing.

It is found in the cell membrane. The protein localises to the secreted. Functionally, receptor for secretory phospholipase A2 (sPLA2). Also able to bind to snake PA2-like toxins. Although its precise function remains unclear, binding of sPLA2 to its receptor participates in both positive and negative regulation of sPLA2 functions as well as clearance of sPLA2. Binding of sPLA2-IB/PLA2G1B induces various effects depending on the cell type, such as activation of the mitogen-activated protein kinase (MAPK) cascade to induce cell proliferation, the production of lipid mediators, selective release of arachidonic acid in bone marrow-derived mast cells. In neutrophils, binding of sPLA2-IB/PLA2G1B can activate p38 MAPK to stimulate elastase release and cell adhesion. May be involved in responses in pro-inflammatory cytokine productions during endotoxic shock. Also has endocytic properties and rapidly internalizes sPLA2 ligands, which is particularly important for the clearance of extracellular sPLA2s to protect their potent enzymatic activities. The soluble secretory phospholipase A2 receptor form is circulating and acts as a negative regulator of sPLA2 functions by blocking the biological functions of sPLA2-IB/PLA2G1B and sPLA2-X/PLA2G10. The protein is Secretory phospholipase A2 receptor (PLA2R1) of Pongo abelii (Sumatran orangutan).